The following is a 160-amino-acid chain: 6,7-dimethyl-8-ribityllumazine synthase (160 aa).

Residues Trp-26, Ala-58–Glu-60, and Val-80–Ile-82 contribute to the 5-amino-6-(D-ribitylamino)uracil site. Glu-85–Thr-86 is a (2S)-2-hydroxy-3-oxobutyl phosphate binding site. The active-site Proton donor is His-88. 5-amino-6-(D-ribitylamino)uracil is bound at residue Asn-113. (2S)-2-hydroxy-3-oxobutyl phosphate is bound at residue Arg-127.

This sequence belongs to the DMRL synthase family. Homopentamer.

The catalysed reaction is (2S)-2-hydroxy-3-oxobutyl phosphate + 5-amino-6-(D-ribitylamino)uracil = 6,7-dimethyl-8-(1-D-ribityl)lumazine + phosphate + 2 H2O + H(+). The protein operates within cofactor biosynthesis; riboflavin biosynthesis; riboflavin from 2-hydroxy-3-oxobutyl phosphate and 5-amino-6-(D-ribitylamino)uracil: step 1/2. Functionally, catalyzes the formation of 6,7-dimethyl-8-ribityllumazine by condensation of 5-amino-6-(D-ribitylamino)uracil with 3,4-dihydroxy-2-butanone 4-phosphate. This is the penultimate step in the biosynthesis of riboflavin. This is 6,7-dimethyl-8-ribityllumazine synthase from Mycobacteroides abscessus (strain ATCC 19977 / DSM 44196 / CCUG 20993 / CIP 104536 / JCM 13569 / NCTC 13031 / TMC 1543 / L948) (Mycobacterium abscessus).